A 389-amino-acid chain; its full sequence is Meiosis-specific protein MEI4 (389 aa).

An interaction with REC114 region spans residues 1–127 (MDIQPWYLKT…LSQHFVESTD (127 aa)).

It belongs to the MEI4L family. Part of the MCD recombinosome complex, at least composed of IHO1, REC114 and MEI4. Forms a complex with REC114; the interaction is required for MEI4 stability. Interacts (via N-terminal domain) with REC114 (via C-terminal domain). Interacts with IHO1. As to expression, expressed in adult testis and brain and in embryonic ovary.

It localises to the chromosome. Required for DNA double-strand breaks (DSBs) formation in unsynapsed regions during meiotic recombination. Probably acts by forming a complex with IHO1 and REC114, which activates DSBs formation in unsynapsed regions, an essential step to ensure completion of synapsis. This is Meiosis-specific protein MEI4 from Mus musculus (Mouse).